Consider the following 531-residue polypeptide: L-aspartate oxidase (531 aa).

FAD is bound by residues 11–14 (SGAA), K33, 40–47 (NSVYAQGG), 151–152 (TA), and D205. Catalysis depends on R272, which acts as the Proton donor/acceptor. FAD is bound by residues E353 and 369–370 (SL).

It belongs to the FAD-dependent oxidoreductase 2 family. NadB subfamily. As to quaternary structure, monomer. Homodimer. Requires FAD as cofactor.

It localises to the cytoplasm. The enzyme catalyses L-aspartate + O2 = iminosuccinate + H2O2. It carries out the reaction fumarate + L-aspartate = iminosuccinate + succinate. It participates in cofactor biosynthesis; NAD(+) biosynthesis; iminoaspartate from L-aspartate (oxidase route): step 1/1. Its function is as follows. Catalyzes the oxidation of L-aspartate to iminoaspartate, the first step in the de novo biosynthesis of NAD(+). Can use either oxygen or fumarate as electron acceptors, which allows the enzyme to be functional under aerobic and anaerobic conditions. This Bacillus subtilis (strain 168) protein is L-aspartate oxidase.